Here is a 176-residue protein sequence, read N- to C-terminus: MKQRGVTIWLTGLSGAGKSTITEALAQKLREQDYPLEVLDGDVVRTNLTKGLGFSKEDRDENIRRIGFVCNLLTRHGVFVLVSAISPYREIREEVRGKIGDFVEVFVNAPLAVCEQRDVKGLYKRARAGEIKSFTGIDDPYEPPLNPEVECRTDLEELDESVNKILHKLDQLGYLR.

12-19 (GLSGAGKS) contributes to the ATP binding site. Serine 86 acts as the Phosphoserine intermediate in catalysis.

The protein belongs to the APS kinase family.

It catalyses the reaction adenosine 5'-phosphosulfate + ATP = 3'-phosphoadenylyl sulfate + ADP + H(+). It functions in the pathway sulfur metabolism; hydrogen sulfide biosynthesis; sulfite from sulfate: step 2/3. Catalyzes the synthesis of activated sulfate. This is Adenylyl-sulfate kinase from Gloeothece citriformis (strain PCC 7424) (Cyanothece sp. (strain PCC 7424)).